Reading from the N-terminus, the 316-residue chain is Olfactory receptor 10H28 (316 aa).

Topologically, residues 1 to 26 (MPGQNYSTISEFILFGFSAFPHQMLP) are extracellular. An N-linked (GlcNAc...) asparagine glycan is attached at N5. A helical membrane pass occupies residues 27–47 (ALFLLYLLMYLFTLLGNLVIM). Over 48 to 57 (AAIWTEHRLH) the chain is Cytoplasmic. Residues 58 to 78 (TPMYLFLCALSISEILFTVVI) form a helical membrane-spanning segment. Residues 79–100 (TPRMLSDMLSTHRSITFIACAN) lie on the Extracellular side of the membrane. Residues C98 and C190 are joined by a disulfide bond. A helical transmembrane segment spans residues 101 to 121 (QLFFSFTFGYTHSFLLVVMGY). Residues 122–144 (DRYVAICRPLHYHALMSLQGCAR) are Cytoplasmic-facing. The chain crosses the membrane as a helical span at residues 145-165 (LVAWSWAGGSLIGMALTIIIF). Residues 166 to 207 (HLTFCESNVIHHILCHVFSLLKLACGERTAFVTIAVILVCVT) are Extracellular-facing. Residues 208–228 (PLIGCLVFIILSYIFIVAAIL) traverse the membrane as a helical segment. Topologically, residues 229 to 241 (RIPSTEGRHKTFS) are cytoplasmic. The chain crosses the membrane as a helical span at residues 242 to 262 (TCASHLTVVIVHYGFASIIYL). Residues 263–273 (KSRGLYSQYTD) lie on the Extracellular side of the membrane. A helical transmembrane segment spans residues 274-294 (TLMSTTYTVFTPFLSPIIFSL). At 295–316 (RNKELKNAIIKSFHRNVCQQSI) the chain is on the cytoplasmic side.

It belongs to the G-protein coupled receptor 1 family.

It is found in the cell membrane. In terms of biological role, odorant receptor. This is Olfactory receptor 10H28 from Mus musculus (Mouse).